Reading from the N-terminus, the 62-residue chain is uncharacterized protein (62 aa).

This is an uncharacterized protein from Invertebrate iridescent virus 6 (IIV-6).